Consider the following 317-residue polypeptide: Melanocyte-stimulating hormone receptor (317 aa).

Residues 1-37 (MSVQGPQRRLLGSLNSTSPAAPRLGLAANQTGPRCLE) lie on the Extracellular side of the membrane. N-linked (GlcNAc...) asparagine glycosylation is found at Asn15 and Asn29. The chain crosses the membrane as a helical span at residues 38–63 (VSVPDGLFLSLGLVSVVENVLVVAAI). The Cytoplasmic portion of the chain corresponds to 64–72 (AKNRNLHSP). A helical membrane pass occupies residues 73-93 (MYYFICCLAVSDLLVSVSSVL). The Extracellular portion of the chain corresponds to 94 to 118 (ETAVMLLLEAGTLAGRAAVVQQLDD). The chain crosses the membrane as a helical span at residues 119 to 140 (VIDVLVCGAMVSSLCFLGAIAV). Residues 141–163 (DRYISIFYALRYHSIVTLPRAWR) lie on the Cytoplasmic side of the membrane. The helical transmembrane segment at 164–183 (AISAIWVASVLSSTLFIAYY) threads the bilayer. At 184 to 191 (DHTAVLLC) the chain is on the extracellular side. A helical membrane pass occupies residues 192–211 (LVSFFVAMLVLMAVLYVHML). Over 212-240 (ARACQHARGIARLHKRQRPVHQGLGLKGA) the chain is Cytoplasmic. The chain crosses the membrane as a helical span at residues 241–266 (ATLTILLGIFFLCWGPFFLHLSLMVL). Over 267–279 (CPRHPICGCVFKN) the chain is Extracellular. A helical transmembrane segment spans residues 280-300 (FNLFLTLIICNSIVDPLIYAF). Residues 301 to 317 (RSQELRKTLQEVLLCSW) lie on the Cytoplasmic side of the membrane. A lipid anchor (S-palmitoyl cysteine) is attached at Cys315.

The protein belongs to the G-protein coupled receptor 1 family. In terms of assembly, interacts with MGRN1, but does not undergo MGRN1-mediated ubiquitination; this interaction competes with GNAS-binding and thus inhibits agonist-induced cAMP production. Interacts with OPN3; the interaction results in a decrease in MC1R-mediated cAMP signaling and ultimately a decrease in melanin production in melanocytes.

It is found in the cell membrane. Receptor for MSH (alpha, beta and gamma) and ACTH. The activity of this receptor is mediated by G proteins which activate adenylate cyclase. Mediates melanogenesis, the production of eumelanin (black/brown) and phaeomelanin (red/yellow), via regulation of cAMP signaling in melanocytes. The sequence is that of Melanocyte-stimulating hormone receptor (MC1R) from Panthera onca (Jaguar).